The chain runs to 478 residues: Dynein regulatory complex subunit 4 (478 aa).

Basic residues predominate over residues 1–12; the sequence is MAPKRRGKKGKA. Residues 1–32 form a disordered region; that stretch reads MAPKRRGKKGKAKGNAVVDGVAPEDMSKEQVE. Residues 1–114 are regulates microtubule-binding; it reads MAPKRRGKKG…LLYEHQNNLA (114 aa). Coiled-coil stretches lie at residues 24–201 and 243–427; these read EDMS…DELD and NNLA…LARV. The interval 115–258 is microtubule-binding; the sequence is EVKTEGTVVM…NSLKEQMEDM (144 aa). The interval 357 to 478 is interaction with SMO; the sequence is QQKTGFKNLV…GPAGLVGAPT (122 aa).

Belongs to the DRC4 family. As to quaternary structure, component of the nexin-dynein regulatory complex (N-DRC). Interacts with microtubules. Interacts with SMO. Interacts (via coiled-coil domains) with RAB3B (in GTP-bound form). Interacts with DRC1. Interacts with DRC7.

It localises to the cytoplasm. The protein resides in the cytoskeleton. The protein localises to the cell projection. It is found in the cilium. Its subcellular location is the flagellum. It localises to the cilium axoneme. The protein resides in the cilium basal body. The protein localises to the golgi apparatus. It is found in the flagellum axoneme. Its function is as follows. Component of the nexin-dynein regulatory complex (N-DRC), a key regulator of ciliary/flagellar motility which maintains the alignment and integrity of the distal axoneme and regulates microtubule sliding in motile axonemes. Plays an important role in the assembly of the N-DRC linker. Plays dual roles at both the primary (or non-motile) cilia to regulate hedgehog signaling and in motile cilia to coordinate cilia movement. Required for proper motile cilia functioning. Positively regulates ciliary smoothened (SMO)-dependent Hedgehog (Hh) signaling pathway by facilitating the trafficking of SMO into the cilium and the stimulation of SMO activity in a GRK2-dependent manner. This is Dynein regulatory complex subunit 4 (Gas8) from Rattus norvegicus (Rat).